Consider the following 423-residue polypeptide: UDP-N-acetylglucosamine 1-carboxyvinyltransferase 2 (423 aa).

23–24 contacts phosphoenolpyruvate; that stretch reads KN. Arg93 provides a ligand contact to UDP-N-acetyl-alpha-D-glucosamine. The Proton donor role is filled by Cys117. Residue Cys117 is modified to 2-(S-cysteinyl)pyruvic acid O-phosphothioketal. Residues 122-126, Asp305, and Ile327 contribute to the UDP-N-acetyl-alpha-D-glucosamine site; that span reads RPIDQ.

It belongs to the EPSP synthase family. MurA subfamily.

It localises to the cytoplasm. It catalyses the reaction phosphoenolpyruvate + UDP-N-acetyl-alpha-D-glucosamine = UDP-N-acetyl-3-O-(1-carboxyvinyl)-alpha-D-glucosamine + phosphate. Its pathway is cell wall biogenesis; peptidoglycan biosynthesis. Its function is as follows. Cell wall formation. Adds enolpyruvyl to UDP-N-acetylglucosamine. The sequence is that of UDP-N-acetylglucosamine 1-carboxyvinyltransferase 2 from Listeria innocua serovar 6a (strain ATCC BAA-680 / CLIP 11262).